A 530-amino-acid chain; its full sequence is 4,4'-diapolycopene aldehyde oxidase (530 aa).

Active-site residues include Glu234 and Cys268.

The protein belongs to the aldehyde dehydrogenase family.

The catalysed reaction is all-trans-4,4'-diapolycopen-4-al + A + H2O = all-trans-4,4'-diapolycopen-4-oate + AH2 + H(+). The enzyme catalyses all-trans-4,4'-diapolycopene-4,4'-dial + 2 A + 2 H2O = all-trans-4,4'-diapolycopene-4,4'-dioate + 2 AH2 + 2 H(+). Its pathway is carotenoid biosynthesis. Functionally, involved in the biosynthesis of C30 carotenoids. Catalyzes the oxidation of 4,4'-diapolycopene-4,4'-dial to yield 4,4'-diapolycopene-4,4'-dioic acid. Also able to catalyze the oxidation of 4,4'-diapolycopen-4-al to yield 4,4'-diapolycopen-4-oic acid. This chain is 4,4'-diapolycopene aldehyde oxidase, found in Methylomonas sp.